We begin with the raw amino-acid sequence, 160 residues long: uncharacterized protein (160 aa).

It is found in the cytoplasm. Its subcellular location is the nucleus. This is an uncharacterized protein from Schizosaccharomyces pombe (strain 972 / ATCC 24843) (Fission yeast).